A 62-amino-acid chain; its full sequence is MALDIKLLDIIACPVCKGKLHYNKAVHELVCRFDKLAYPLEEGIPVLLENRARQLNSDEMPS.

This sequence belongs to the UPF0434 family.

The protein is UPF0434 protein ASA_1553 of Aeromonas salmonicida (strain A449).